A 445-amino-acid chain; its full sequence is Probable phosphoglucosamine mutase (445 aa).

Ser99 serves as the catalytic Phosphoserine intermediate. Positions 99, 238, 240, and 242 each coordinate Mg(2+). A Phosphoserine modification is found at Ser99.

Belongs to the phosphohexose mutase family. The cofactor is Mg(2+). Activated by phosphorylation.

The catalysed reaction is alpha-D-glucosamine 1-phosphate = D-glucosamine 6-phosphate. Its function is as follows. Catalyzes the conversion of glucosamine-6-phosphate to glucosamine-1-phosphate. The chain is Probable phosphoglucosamine mutase from Methanobrevibacter smithii (strain ATCC 35061 / DSM 861 / OCM 144 / PS).